We begin with the raw amino-acid sequence, 100 residues long: Class II hydrophobin CU (100 aa).

An N-terminal signal peptide occupies residues 1–25 (MQFSIATIALFLSSAMAAPYSGNSN). Intrachain disulfides connect cysteine 32–cysteine 82, cysteine 42–cysteine 72, cysteine 43–cysteine 55, and cysteine 83–cysteine 94.

The protein belongs to the cerato-ulmin hydrophobin family. In terms of assembly, homotetramer. Further self-assembles to form highly ordered films at water-air interfaces through intermolecular interactions.

It is found in the secreted. The protein resides in the cell wall. Aerial growth, conidiation, and dispersal of filamentous fungi in the environment rely upon a capability of their secreting small amphipathic proteins called hydrophobins (HPBs) with low sequence identity. Class I can self-assemble into an outermost layer of rodlet bundles on aerial cell surfaces, conferring cellular hydrophobicity that supports fungal growth, development and dispersal; whereas Class II form highly ordered films at water-air interfaces through intermolecular interactions but contribute nothing to the rodlet structure. CU is a class II hydrophobin that is implicated in the pathogenicity of this fungus on elm trees. Required for hydrophobicity and adherence of the cells and acts as a parasitic fitness factor by protecting infectious propagules from desiccation. Reduces the interfacial tension of both oil-water and air-water interfaces. This chain is Class II hydrophobin CU, found in Ophiostoma ulmi (Dutch elm disease fungus).